The sequence spans 501 residues: UPF0371 protein CD630_08980 (501 aa).

The protein belongs to the UPF0371 family.

The chain is UPF0371 protein CD630_08980 from Clostridioides difficile (strain 630) (Peptoclostridium difficile).